The primary structure comprises 174 residues: Endoribonuclease YbeY (174 aa).

Positions 129, 133, and 139 each coordinate Zn(2+).

Belongs to the endoribonuclease YbeY family. Zn(2+) is required as a cofactor.

The protein localises to the cytoplasm. Single strand-specific metallo-endoribonuclease involved in late-stage 70S ribosome quality control and in maturation of the 3' terminus of the 16S rRNA. The polypeptide is Endoribonuclease YbeY (Lactobacillus delbrueckii subsp. bulgaricus (strain ATCC BAA-365 / Lb-18)).